Here is a 192-residue protein sequence, read N- to C-terminus: MSTIWIAIAALSALALAFGLVLGYASRRFEVENDPIVEEVEAMLPQSQCGQCGYPGCRPYAEAVALNGENINKCGPGGEAMMLKLAEKLNVDPQPLEGDADVQAPARQVAWIDESNCIGCTKCIQACPVDAIIGSTKAVHTVVSDLCTGCDLCVAPCPTDCIELRPIAPTPANWKWDLDTIPVRVIQVERHA.

Residues 1-26 are hydrophobic; it reads MSTIWIAIAALSALALAFGLVLGYAS. Residues 32 to 91 enclose the 4Fe-4S domain; it reads ENDPIVEEVEAMLPQSQCGQCGYPGCRPYAEAVALNGENINKCGPGGEAMMLKLAEKLNV. Residues cysteine 49, cysteine 52, cysteine 57, cysteine 74, cysteine 117, cysteine 120, cysteine 123, cysteine 127, cysteine 147, cysteine 150, cysteine 153, and cysteine 157 each coordinate [4Fe-4S] cluster. 4Fe-4S ferredoxin-type domains are found at residues 108-137 and 138-167; these read QVAWIDESNCIGCTKCIQACPVDAIIGSTK and AVHTVVSDLCTGCDLCVAPCPTDCIELRPI.

This sequence belongs to the 4Fe4S bacterial-type ferredoxin family. RnfB subfamily. As to quaternary structure, the complex is composed of six subunits: RnfA, RnfB, RnfC, RnfD, RnfE and RnfG. [4Fe-4S] cluster serves as cofactor.

The protein localises to the cell inner membrane. Functionally, part of a membrane-bound complex that couples electron transfer with translocation of ions across the membrane. The polypeptide is Ion-translocating oxidoreductase complex subunit B (Pectobacterium carotovorum subsp. carotovorum (strain PC1)).